A 491-amino-acid polypeptide reads, in one-letter code: Cobyric acid synthase (491 aa).

Residues 249-439 form the GATase cobBQ-type domain; it reads PIDIAVIKLP…IHGVFDGVEF (191 aa). Cys-329 serves as the catalytic Nucleophile. Residue His-431 is part of the active site.

Belongs to the CobB/CobQ family. CobQ subfamily.

It functions in the pathway cofactor biosynthesis; adenosylcobalamin biosynthesis. In terms of biological role, catalyzes amidations at positions B, D, E, and G on adenosylcobyrinic A,C-diamide. NH(2) groups are provided by glutamine, and one molecule of ATP is hydrogenolyzed for each amidation. This chain is Cobyric acid synthase, found in Clostridium tetani (strain Massachusetts / E88).